A 142-amino-acid polypeptide reads, in one-letter code: Large ribosomal subunit protein uL16 (142 aa).

It belongs to the universal ribosomal protein uL16 family. In terms of assembly, part of the 50S ribosomal subunit.

Functionally, binds 23S rRNA and is also seen to make contacts with the A and possibly P site tRNAs. This chain is Large ribosomal subunit protein uL16, found in Gemmatimonas aurantiaca (strain DSM 14586 / JCM 11422 / NBRC 100505 / T-27).